The sequence spans 867 residues: Probable potassium transporter 15 (867 aa).

Residues 1 to 13 (MAASSSSSASASA) show a composition bias toward low complexity. The segment at 1-88 (MAASSSSSAS…EGEGEDGEKQ (88 aa)) is disordered. Residues 1–124 (MAASSSSSAS…DSEEFDFGRT (124 aa)) are Cytoplasmic-facing. The segment covering 32–44 (TEEDDEGEEDGDT) has biased composition (acidic residues). The span at 45-54 (VEAAAAAVGA) shows a compositional bias: low complexity. The span at 63 to 84 (SEEEEDEEDGGGGGEGEGEGED) shows a compositional bias: acidic residues. Residues 125–145 (MFLALQTLAVVFGDIGISPLY) form a helical membrane-spanning segment. Residues 146–167 (TFDVMFSKYPILGEEDVLGALS) are Extracellular-facing. A helical membrane pass occupies residues 168–188 (LVLYTLISMPLVKYVLVVLWA). The Cytoplasmic segment spans residues 189–252 (NDDGEGGIFA…KLESSLLLKK (64 aa)). A helical membrane pass occupies residues 253-273 (LLLGLVLFGTAMFISNGVITP). Topologically, residues 274–285 (AMSVLSAVSGLK) are extracellular. A helical membrane pass occupies residues 286–306 (VGIPNASQGLVVMISVVLLVI). Residues 307–317 (LYSVQRYATSK) are Cytoplasmic-facing. A helical transmembrane segment spans residues 318–338 (MGFALGPSLLIWFCCLGGIGI). Topologically, residues 339–365 (YNLSTYGPAAFKAFNPLYIIYYFGRNP) are extracellular. N340 carries an N-linked (GlcNAc...) asparagine glycan. Residues 366–386 (FQAWLSLAGCLLCATGSEAIF) traverse the membrane as a helical segment. Over 387 to 400 (ANLSYFPVRYVQSM) the chain is Cytoplasmic. Residues 401-421 (FALLVLPCLVLAYLGQGAFLI) form a helical membrane-spanning segment. At 422–433 (ANQNSSEQIFFS) the chain is on the extracellular side. Residue N425 is glycosylated (N-linked (GlcNAc...) asparagine). The chain crosses the membrane as a helical span at residues 434-454 (SIPSGVFWPVFLIANLAALIA). Over 455 to 490 (SRTMTTAIFQCLKQSIALGCFPRLKIIHTSRKFMAK) the chain is Cytoplasmic. A helical transmembrane segment spans residues 491–511 (IYIPVVNWFLLFSCLGFILLF). The Extracellular portion of the chain corresponds to 512–522 (RSIYDVGNAYA). Residues 523-543 (IAELGVMIMATVYVTIIMLLI) form a helical membrane-spanning segment. Residues 544–545 (WE) lie on the Cytoplasmic side of the membrane. The helical transmembrane segment at 546 to 566 (TSIVKVLSFVITFLSLELVFF) threads the bilayer. The Extracellular portion of the chain corresponds to 567–572 (SSSLSS). The helical transmembrane segment at 573-593 (VGDGGWALIIFASGILMVMFI) threads the bilayer. At 594 to 867 (WNYGSKLKYD…VMQVRLTSYV (274 aa)) the chain is on the cytoplasmic side.

This sequence belongs to the HAK/KUP transporter (TC 2.A.72.3) family.

The protein localises to the membrane. In terms of biological role, high-affinity potassium transporter. This is Probable potassium transporter 15 (HAK15) from Oryza sativa subsp. japonica (Rice).